The sequence spans 800 residues: Phenylalanine--tRNA ligase beta subunit (800 aa).

Positions G38–G147 constitute a tRNA-binding domain. The B5 domain occupies V401–E477. The Mg(2+) site is built by D455, D461, E464, and E465. Positions P708–R799 constitute an FDX-ACB domain.

It belongs to the phenylalanyl-tRNA synthetase beta subunit family. Type 1 subfamily. In terms of assembly, tetramer of two alpha and two beta subunits. It depends on Mg(2+) as a cofactor.

The protein resides in the cytoplasm. The catalysed reaction is tRNA(Phe) + L-phenylalanine + ATP = L-phenylalanyl-tRNA(Phe) + AMP + diphosphate + H(+). This is Phenylalanine--tRNA ligase beta subunit from Anaeromyxobacter dehalogenans (strain 2CP-C).